The following is a 170-amino-acid chain: MAVKIKLTRLGKIRNPQYRIAVADARTRRDGRSIEIIGRYHPKEDPSLIEINSERAQYWLSVGAQPTEPVLKLLKITGDWQKFKGLPGAEGRLKVAPPKPSKLELFNAALAEAEGGPTTEAAKPKKKAATSGAKKAAKAAEPEAAAPEAAEPEAAAPAEGGEQAESSTES.

Positions 114–170 (EGGPTTEAAKPKKKAATSGAKKAAKAAEPEAAAPEAAEPEAAAPAEGGEQAESSTES) are disordered. Residues 142–170 (PEAAAPEAAEPEAAAPAEGGEQAESSTES) are compositionally biased toward low complexity.

It belongs to the bacterial ribosomal protein bS16 family.

This chain is Small ribosomal subunit protein bS16, found in Mycobacterium avium (strain 104).